Reading from the N-terminus, the 413-residue chain is Putative competence-damage inducible protein (413 aa).

This sequence belongs to the CinA family.

This is Putative competence-damage inducible protein from Thermoanaerobacter pseudethanolicus (strain ATCC 33223 / 39E) (Clostridium thermohydrosulfuricum).